The chain runs to 295 residues: Tyrosine transport system permease protein (295 aa).

The next 8 helical transmembrane spans lie at 3–23, 57–77, 81–101, 122–142, 173–193, 200–220, 232–252, and 256–276; these read GIIS…GVYI, VVAT…TGIL, FKIS…SINL, ISPI…LDLF, ILGL…MAQF, NMGI…ITLF, IIVG…LGML, and LKLI…LNIS.

Belongs to the binding-protein-dependent transport system permease family. The complex is probably composed of two ATP-binding proteins (CDR20291_0806), two transmembrane proteins (CDR20291_0807) and a solute-binding protein (CDR20291_0805).

The protein resides in the cell membrane. In terms of biological role, probably part of an ABC transporter complex involved in tyrosine uptake. May also import phenylalanine. Probably responsible for the translocation of the substrate across the membrane. The polypeptide is Tyrosine transport system permease protein (Clostridioides difficile (strain R20291) (Peptoclostridium difficile)).